The chain runs to 1068 residues: Cytospin-B (1068 aa).

Residues 1–221 (MRSAAKPWNP…VDGTSVSPGD (221 aa)) form a disordered region. The N-myristoyl glycine moiety is linked to residue arginine 2. Residues 29 to 40 (SSGMKSSKSSTS) show a composition bias toward low complexity. A phosphoserine mark is found at serine 38 and serine 55. Residue threonine 78 is modified to Phosphothreonine. Phosphoserine occurs at positions 112, 131, 134, 137, and 138. A compositionally biased stretch (low complexity) spans 126 to 144 (SNPRKSVSSPTSSNTPTPT). A Phosphothreonine modification is found at threonine 142. Over residues 154–200 (PKQENEGGEKAALESQVRELLAEAKAKDSEINRLRSELKKYKEKRTL) the composition is skewed to basic and acidic residues. Phosphoserine occurs at positions 218 and 241. 3 stretches are compositionally biased toward polar residues: residues 261 to 295 (PNSEGAASHTGDSSCPTSITQESSFGSPTGNQMSS), 309 to 323 (LRTSGSSSSDVTKAS), and 337 to 367 (ETPSRPLSSTSNPFKSSKCSTAGSSPNSVSE). Positions 261–367 (PNSEGAASHT…AGSSPNSVSE (107 aa)) are disordered. Residues serine 361, serine 366, serine 369, and serine 425 each carry the phosphoserine modification. Residues 579–773 (EVQEMLKVAR…QKELGDVQGH (195 aa)) adopt a coiled-coil conformation. Positions 777-796 (VTSRAAPPPVDEEPESSEVD) are disordered. Phosphoserine is present on residues serine 847 and serine 863. Disordered stretches follow at residues 859 to 885 (AAAVSPMQRHSTYSSVRPASRGVTQRL) and 898 to 922 (GRTETLKPDPHLRKSPSLESLSRPP). A compositionally biased stretch (polar residues) spans 866-875 (QRHSTYSSVR). Residues 898 to 909 (GRTETLKPDPHL) are compositionally biased toward basic and acidic residues. Residues serine 912 and serine 914 each carry the phosphoserine modification. Over residues 912–922 (SPSLESLSRPP) the composition is skewed to low complexity. Positions 962-1067 (GSKRNALLKW…YVAQIYKYFE (106 aa)) constitute a Calponin-homology (CH) domain.

This sequence belongs to the cytospin-A family. In terms of tissue distribution, highly expressed in testis. Barely detectable in other tissues. Also highly expressed in some cancer cell lines.

Its subcellular location is the nucleus. The protein localises to the membrane. The sequence is that of Cytospin-B (SPECC1) from Homo sapiens (Human).